The following is a 172-amino-acid chain: Large ribosomal subunit protein uL10 (172 aa).

It belongs to the universal ribosomal protein uL10 family. As to quaternary structure, part of the ribosomal stalk of the 50S ribosomal subunit. The N-terminus interacts with L11 and the large rRNA to form the base of the stalk. The C-terminus forms an elongated spine to which L12 dimers bind in a sequential fashion forming a multimeric L10(L12)X complex.

Its function is as follows. Forms part of the ribosomal stalk, playing a central role in the interaction of the ribosome with GTP-bound translation factors. This Rhizobium etli (strain CIAT 652) protein is Large ribosomal subunit protein uL10.